The sequence spans 81 residues: Sulfur carrier protein TusA (81 aa).

Residue Cys19 is the Cysteine persulfide intermediate of the active site.

This sequence belongs to the sulfur carrier protein TusA family. Interacts with IscS.

It is found in the cytoplasm. The protein operates within tRNA modification. In terms of biological role, sulfur carrier protein involved in sulfur trafficking in the cell. Part of a sulfur-relay system required for 2-thiolation during synthesis of 2-thiouridine of the modified wobble base 5-methylaminomethyl-2-thiouridine (mnm(5)s(2)U) in tRNA. Interacts with IscS and stimulates its cysteine desulfurase activity. Accepts an activated sulfur from IscS, which is then transferred to TusD, and thus determines the direction of sulfur flow from IscS to 2-thiouridine formation. Also appears to be involved in sulfur transfer for the biosynthesis of molybdopterin. In Citrobacter koseri (strain ATCC BAA-895 / CDC 4225-83 / SGSC4696), this protein is Sulfur carrier protein TusA.